The sequence spans 347 residues: Selenide, water dikinase (347 aa).

Cysteine 17 is a catalytic residue. ATP is bound by residues lysine 20 and 48–50 (TRD). Aspartate 51 contacts Mg(2+). ATP is bound by residues aspartate 68, aspartate 91, and 139 to 141 (GHS). Aspartate 91 contributes to the Mg(2+) binding site. Mg(2+) is bound at residue aspartate 227.

The protein belongs to the selenophosphate synthase 1 family. Class I subfamily. As to quaternary structure, homodimer. The cofactor is Mg(2+).

The enzyme catalyses hydrogenselenide + ATP + H2O = selenophosphate + AMP + phosphate + 2 H(+). In terms of biological role, synthesizes selenophosphate from selenide and ATP. The polypeptide is Selenide, water dikinase (Enterobacter sp. (strain 638)).